The chain runs to 195 residues: Cysteine/O-acetylserine efflux protein (195 aa).

Residues 1–7 (MTPTLLS) lie on the Periplasmic side of the membrane. Residues 8-28 (AFWTYTLITAMTPGPNNILAL) form a helical membrane-spanning segment. The Cytoplasmic portion of the chain corresponds to 29 to 46 (SSATSHGFRQSTRVLAGM). The chain crosses the membrane as a helical span at residues 47-67 (SLGFLIVMLLCAGISFSLAVI). Over 68-69 (DP) the chain is Periplasmic. A helical membrane pass occupies residues 70–90 (AAVHLLSWAGAAYIVWLAWKI). Over 91-104 (ATSPTKEDGLQAKP) the chain is Cytoplasmic. Residues 105 to 125 (ISFWASFALQFVNVKIILYGV) form a helical membrane-spanning segment. Residues 126–141 (TALSTFVLPQTQALSW) lie on the Periplasmic side of the membrane. A helical transmembrane segment spans residues 142–162 (VVGVSVLLAMIGTFGNVCWAL). Over 163-176 (AGHLFQRLFRQYGR) the chain is Cytoplasmic. A helical membrane pass occupies residues 177-194 (QLNIVLALLLVYCAVRIF). Residue Tyr-195 is a topological domain, periplasmic.

Belongs to the Rht family.

The protein resides in the cell inner membrane. It catalyses the reaction O-acetyl-L-serine(in) = O-acetyl-L-serine(out). The catalysed reaction is L-cysteine(in) = L-cysteine(out). In terms of biological role, exporter of O-acetylserine (OAS) and cysteine. This chain is Cysteine/O-acetylserine efflux protein (eamB), found in Escherichia coli O9:H4 (strain HS).